Consider the following 512-residue polypeptide: CaM kinase-like vesicle-associated protein (512 aa).

One can recognise a Protein kinase domain in the interval 24–286 (YDLGQVIKTE…AEEAISHEWI (263 aa)). The segment at 328–347 (APEQSGTAATQSASDAATPG) is disordered. Residues 332–347 (SGTAATQSASDAATPG) show a composition bias toward low complexity. The residue at position 392 (S392) is a Phosphoserine. The interval 393–512 (ADRSATPATD…AQESQRVETS (120 aa)) is disordered. Residues 398–439 (TPATDGSATPATDGSVTPATDGSITPATDGSVTPATDRSATP) show a composition bias toward polar residues. Phosphothreonine is present on T446. Residues 449-460 (TEESTVPATQSS) show a composition bias toward polar residues. Low complexity predominate over residues 461 to 478 (ALPAAKAAATPEPAVAQP). A Phosphothreonine modification is found at T470.

This sequence belongs to the protein kinase superfamily. CAMK Ser/Thr protein kinase family. As to quaternary structure, interacts with calmodulin, in the presence of calcium. Ca(2+) serves as cofactor.

It is found in the cell membrane. It localises to the cytoplasmic vesicle membrane. Functionally, does not appear to have detectable kinase activity. The chain is CaM kinase-like vesicle-associated protein (Camkv) from Mus musculus (Mouse).